A 225-amino-acid chain; its full sequence is Orotate phosphoribosyltransferase (225 aa).

K29 is a 5-phospho-alpha-D-ribose 1-diphosphate binding site. 37-38 contacts orotate; sequence FF. 5-phospho-alpha-D-ribose 1-diphosphate is bound by residues 75-76, R105, K106, K109, H111, and 130-138; these read YK and DDVITAGTS. Orotate is bound by residues T134 and R162.

This sequence belongs to the purine/pyrimidine phosphoribosyltransferase family. PyrE subfamily. As to quaternary structure, homodimer. Mg(2+) serves as cofactor.

The enzyme catalyses orotidine 5'-phosphate + diphosphate = orotate + 5-phospho-alpha-D-ribose 1-diphosphate. It functions in the pathway pyrimidine metabolism; UMP biosynthesis via de novo pathway; UMP from orotate: step 1/2. Functionally, catalyzes the transfer of a ribosyl phosphate group from 5-phosphoribose 1-diphosphate to orotate, leading to the formation of orotidine monophosphate (OMP). In Bordetella petrii (strain ATCC BAA-461 / DSM 12804 / CCUG 43448), this protein is Orotate phosphoribosyltransferase.